A 401-amino-acid chain; its full sequence is MTNRVVLAYSGGLDTSVAIPYLSKMTGGEVVAVSLDLGQGGEDMESVRQRALDCGAVESIVIDAKDEFAEEYCLPTIKANGMYMKQYPLVSAISRPLIVKHLVQAAKEHGGTHVSHGCTGKGNDQVRFEVGFMDLDPSLEIIAPARDYAWTRDKAIEFAEENNVPIEQSAASPFSIDQNVWGRAIETGFLEDLWNPPTKDLYAYTEDPALGNAPDEVIITFKSGKPVAIDGRPVTMLEAIEELNRRGGAQGVGRLDMVEDRLVGIKSREIYEAPGAIILITAHEAMEDVTIERELARYKRGIDARWSEEVYDGLWFGPLKRSLDAFIESTQEHVTGDIRLVLHAGKVTVNGRRSGSSLYDFNLATYDTGDTFDQTAAKGFVQLHGLSSKIANKRDREAGEN.

Residue 8 to 16 (AYSGGLDTS) participates in ATP binding. Tyr87 lines the L-citrulline pocket. Gly117 contributes to the ATP binding site. Positions 119, 123, and 124 each coordinate L-aspartate. Asn123 contacts L-citrulline. L-citrulline-binding residues include Arg127, Ser175, Glu259, and Tyr271.

The protein belongs to the argininosuccinate synthase family. Type 1 subfamily. Homotetramer.

It localises to the cytoplasm. It catalyses the reaction L-citrulline + L-aspartate + ATP = 2-(N(omega)-L-arginino)succinate + AMP + diphosphate + H(+). It participates in amino-acid biosynthesis; L-arginine biosynthesis; L-arginine from L-ornithine and carbamoyl phosphate: step 2/3. The sequence is that of Argininosuccinate synthase from Corynebacterium efficiens (strain DSM 44549 / YS-314 / AJ 12310 / JCM 11189 / NBRC 100395).